The sequence spans 102 residues: NADH-quinone oxidoreductase subunit K (102 aa).

3 helical membrane passes run 5 to 25 (IAHY…GIFL), 31 to 51 (IIIL…FVAF), and 66 to 86 (FILT…VVFF).

It belongs to the complex I subunit 4L family. NDH-1 is composed of 14 different subunits. Subunits NuoA, H, J, K, L, M, N constitute the membrane sector of the complex.

Its subcellular location is the cell inner membrane. It carries out the reaction a quinone + NADH + 5 H(+)(in) = a quinol + NAD(+) + 4 H(+)(out). NDH-1 shuttles electrons from NADH, via FMN and iron-sulfur (Fe-S) centers, to quinones in the respiratory chain. The immediate electron acceptor for the enzyme in this species is believed to be ubiquinone. Couples the redox reaction to proton translocation (for every two electrons transferred, four hydrogen ions are translocated across the cytoplasmic membrane), and thus conserves the redox energy in a proton gradient. The sequence is that of NADH-quinone oxidoreductase subunit K from Bartonella bacilliformis (strain ATCC 35685 / KC583 / Herrer 020/F12,63).